A 162-amino-acid chain; its full sequence is NADH-quinone oxidoreductase subunit I (162 aa).

4Fe-4S ferredoxin-type domains follow at residues 53–83 (LRRY…IEPE) and 93–122 (RRYD…EGPN). [4Fe-4S] cluster contacts are provided by Cys63, Cys66, Cys69, Cys73, Cys102, Cys105, Cys108, and Cys112.

Belongs to the complex I 23 kDa subunit family. As to quaternary structure, NDH-1 is composed of 14 different subunits. Subunits NuoA, H, J, K, L, M, N constitute the membrane sector of the complex. [4Fe-4S] cluster serves as cofactor.

Its subcellular location is the cell inner membrane. The enzyme catalyses a quinone + NADH + 5 H(+)(in) = a quinol + NAD(+) + 4 H(+)(out). NDH-1 shuttles electrons from NADH, via FMN and iron-sulfur (Fe-S) centers, to quinones in the respiratory chain. The immediate electron acceptor for the enzyme in this species is believed to be ubiquinone. Couples the redox reaction to proton translocation (for every two electrons transferred, four hydrogen ions are translocated across the cytoplasmic membrane), and thus conserves the redox energy in a proton gradient. This chain is NADH-quinone oxidoreductase subunit I, found in Paramagnetospirillum magneticum (strain ATCC 700264 / AMB-1) (Magnetospirillum magneticum).